A 437-amino-acid chain; its full sequence is MTHYHFVGIKGSGMSSLAQIMHDLGHEVQGSDIENYVFTEVALRNKGIKILPFDANNIKEDMVVIQGNAFASSHEEIVRAHQLKLDVVSYNDFLGQIIDQYTSVAVTGAHGKTSTTGLLSHVMNGDKKTSFLIGDGTGMGLPESDYFAFEACEYRRHFLSYKPDYAIMTNIDFDHPDYFKDINDVFDAFQEMAHNVKKGIIAWGDDEHLRKIEADVPIYYYGFKESDDIYAQNIQITDKGTAFDVYVDGEFYDHFLSPQYGDHTVLNALAVIAISYLEKLDVTNIKEALETFGGVKRRFNETTIANQVIVDDYAHHPREISATIETARKKYPHKEVVAVFQPHTFSRTQAFLNEFAESLSKADRVFLCEIFGSIRENTGALTIQDLIDKIEGASLINEDSINVLEQFDNAVILFMGAGDIQKLQNAYLDKLGMKNAF.

Gly108 to Ser114 contacts ATP.

Belongs to the MurCDEF family.

The protein localises to the cytoplasm. The catalysed reaction is UDP-N-acetyl-alpha-D-muramate + L-alanine + ATP = UDP-N-acetyl-alpha-D-muramoyl-L-alanine + ADP + phosphate + H(+). The protein operates within cell wall biogenesis; peptidoglycan biosynthesis. Cell wall formation. The protein is UDP-N-acetylmuramate--L-alanine ligase of Staphylococcus aureus (strain MRSA252).